Reading from the N-terminus, the 101-residue chain is PAT complex subunit Asterix (101 aa).

The interval 1-26 is disordered; it reads MADPRRPARVTRYKPPTTESNPALED. Topologically, residues 1–27 are cytoplasmic; it reads MADPRRPARVTRYKPPTTESNPALEDP. A helical transmembrane segment spans residues 28–46; sequence TPDYMNLLGMVFSMCGLML. A topological domain (lumenal) is located at residue lysine 47. Residues 48–65 form a helical membrane-spanning segment; that stretch reads LKWCAWIAVYCSFISFAN. Residues 66–69 lie on the Cytoplasmic side of the membrane; the sequence is SRSS. Residues 70–90 form a helical membrane-spanning segment; sequence EDTKQMMSSFMLSISAVVMSY. Topologically, residues 91-101 are lumenal; sequence LQNPQPMSPPW.

This sequence belongs to the Asterix family. Component of the multi-pass translocon (MPT) complex.

It localises to the endoplasmic reticulum membrane. Functionally, component of the multi-pass translocon (MPT) complex that mediates insertion of multi-pass membrane proteins into the lipid bilayer of membranes. The MPT complex takes over after the SEC61 complex: following membrane insertion of the first few transmembrane segments of proteins by the SEC61 complex, the MPT complex occludes the lateral gate of the SEC61 complex to promote insertion of subsequent transmembrane regions. In Gallus gallus (Chicken), this protein is PAT complex subunit Asterix (WDR83OS).